Reading from the N-terminus, the 1571-residue chain is Neurexin-3 (1571 aa).

An N-terminal signal peptide occupies residues 1-27 (MSFTLHSVFFTLKVSIFLGSLVGLCLG). The 175-residue stretch at 28 to 202 (LEFMGLPNQW…SVQLEAEGPC (175 aa)) folds into the Laminin G-like 1 domain. At 28 to 1496 (LEFMGLPNQW…EVIRESSSTT (1469 aa)) the chain is on the extracellular side. Residues Asn-58 and Asn-105 are each glycosylated (N-linked (GlcNAc...) asparagine). The EGF-like 1 domain maps to 198–235 (AEGPCGERPCENGGICFLLDGHPTCDCSTTGYGGTLCS). Cystine bridges form between Cys-202–Cys-213, Cys-207–Cys-222, and Cys-224–Cys-234. Laminin G-like domains lie at 258–440 (VATF…VFKC) and 447–639 (DPIN…KSSC). Ca(2+) contacts are provided by Asp-304, Leu-321, and Met-374. 5 disulfide bridges follow: Cys-404/Cys-440, Cys-610/Cys-639, Cys-647/Cys-658, Cys-652/Cys-667, and Cys-669/Cys-679. The EGF-like 2 domain occupies 643–680 (SAKQCDSYPCKNNAVCKDGWNRFICDCTGTGYWGRTCE). Laminin G-like domains are found at residues 685-857 (ILSY…IDYC) and 871-1046 (DPVT…ERGC). Positions 732 and 749 each coordinate Ca(2+). Asn-757 carries N-linked (GlcNAc...) asparagine glycosylation. Arg-807 contributes to the Ca(2+) binding site. Intrachain disulfides connect Cys-1018-Cys-1046, Cys-1053-Cys-1064, Cys-1058-Cys-1073, and Cys-1075-Cys-1085. Residues 1049 to 1086 (PSTTCQEDSCANQGVCMQQWEGFTCDCSMTSYSGNQCN) form the EGF-like 3 domain. One can recognise a Laminin G-like 6 domain in the interval 1090–1290 (ATYIFGKSGG…NPNIKINGSV (201 aa)). Ca(2+) is bound by residues Asp-1142 and Ile-1159. Asn-1189 is a glycosylation site (N-linked (GlcNAc...) asparagine). Residues Ile-1241 and Asn-1243 each coordinate Ca(2+). Asn-1287 and Asn-1331 each carry an N-linked (GlcNAc...) asparagine glycan. Residues 1324-1348 (ATTTTRKNRSTASIQPTSDDLVSSA) are disordered. The span at 1333–1348 (STASIQPTSDDLVSSA) shows a compositional bias: polar residues. Ser-1347 carries O-linked (Xyl...) (heparan sulfate) serine glycosylation. A helical membrane pass occupies residues 1497–1517 (GMVVGIVAAAALCILILLYAM). The Cytoplasmic segment spans residues 1518–1571 (YKYRNRDEGSYQVDETRNYISNSAQSNGTLMKEKQASSKSGHKKQKNKDKEYYV). Residues 1539 to 1571 (NSAQSNGTLMKEKQASSKSGHKKQKNKDKEYYV) are disordered.

It belongs to the neurexin family. As to quaternary structure, the laminin G-like domain 2 binds to NXPH1. Specific isoforms bind to alpha-dystroglycan. The cytoplasmic C-terminal region binds to CASK. Specific isoforms bind neuroligins NLGN1, NLGN2 and NLGN3. Interacts with CLSTN3. Post-translationally, O-glycosylated; contains heparan sulfate. Heparan sulfate attachment is required for synapse development by mediating interactions with neuroligins. In terms of tissue distribution, brain and arteries (at protein level).

Its subcellular location is the presynaptic cell membrane. In terms of biological role, neuronal cell surface protein that may be involved in cell recognition and cell adhesion. May mediate intracellular signaling. The chain is Neurexin-3 (Nrxn3) from Mus musculus (Mouse).